We begin with the raw amino-acid sequence, 256 residues long: Phosphatidylglycerol--prolipoprotein diacylglyceryl transferase (256 aa).

The next 3 helical transmembrane spans lie at 19-39 (VHWYGLMYLIGFVSAWLLGYW), 56-76 (LIFYSALGVILGGRVGYMLFY), and 91-111 (IWEGGMSFHGGLLGVVIAAWL). Arginine 139 is a binding site for a 1,2-diacyl-sn-glycero-3-phospho-(1'-sn-glycerol). The chain crosses the membrane as a helical span at residues 231 to 251 (FGWLTMGQVLSIPMLLIGIWL).

Belongs to the Lgt family.

It is found in the cell inner membrane. The catalysed reaction is L-cysteinyl-[prolipoprotein] + a 1,2-diacyl-sn-glycero-3-phospho-(1'-sn-glycerol) = an S-1,2-diacyl-sn-glyceryl-L-cysteinyl-[prolipoprotein] + sn-glycerol 1-phosphate + H(+). It functions in the pathway protein modification; lipoprotein biosynthesis (diacylglyceryl transfer). Catalyzes the transfer of the diacylglyceryl group from phosphatidylglycerol to the sulfhydryl group of the N-terminal cysteine of a prolipoprotein, the first step in the formation of mature lipoproteins. This chain is Phosphatidylglycerol--prolipoprotein diacylglyceryl transferase, found in Legionella pneumophila (strain Lens).